A 215-amino-acid polypeptide reads, in one-letter code: Ribonuclease HII (215 aa).

In terms of domain architecture, RNase H type-2 spans 19 to 214 (KNVIGVDEAG…KILETEEEKT (196 aa)). Positions 25, 26, and 121 each coordinate a divalent metal cation.

Belongs to the RNase HII family. Mn(2+) serves as cofactor. Mg(2+) is required as a cofactor.

The protein resides in the cytoplasm. It carries out the reaction Endonucleolytic cleavage to 5'-phosphomonoester.. Its function is as follows. Endonuclease that specifically degrades the RNA of RNA-DNA hybrids. The sequence is that of Ribonuclease HII from Fusobacterium nucleatum subsp. nucleatum (strain ATCC 25586 / DSM 15643 / BCRC 10681 / CIP 101130 / JCM 8532 / KCTC 2640 / LMG 13131 / VPI 4355).